A 395-amino-acid polypeptide reads, in one-letter code: Serine-type anaerobic sulfatase-maturating enzyme (395 aa).

A Radical SAM core domain is found at 18–249 (PRSPVPFHIL…QWRKRCDRGR (232 aa)). [4Fe-4S] cluster contacts are provided by Cys35 and Cys39. Tyr41 lines the S-adenosyl-L-methionine pocket. Cys42 is a binding site for [4Fe-4S] cluster. S-adenosyl-L-methionine is bound by residues Gly84 and Arg152. Cys270, Cys276, and Cys291 together coordinate [4Fe-4S] cluster. Asp292 acts as the Proton acceptor in catalysis. The [4Fe-4S] cluster site is built by Cys331, Cys334, Cys340, Cys344, and Cys357.

Belongs to the radical SAM superfamily. Anaerobic sulfatase-maturating enzyme family. Monomer. Interacts with AtsA prior to its export to the periplasm. This interaction depends on the presence of AtsA 'Ser-72'. Binding of SAM to AtsB promotes the formation of a ternary AtsA-AtsB-SAM complex. [4Fe-4S] cluster serves as cofactor.

The protein resides in the cytoplasm. The enzyme catalyses L-seryl-[sulfatase] + S-adenosyl-L-methionine = 3-oxo-L-alanyl-[sulfatase] + 5'-deoxyadenosine + L-methionine + H(+). The protein operates within protein modification; sulfatase oxidation. With respect to regulation, activity is inhibited by iron chelators. Its function is as follows. Involved in 'Ser-type' sulfatase maturation under anaerobic conditions. Catalyzes the post-translational modification of serine ('Ser-72' in the arylsulfatase AtsA) into 3-oxoalanine (also known as C(alpha)-formylglycine (FGly)), by a free radical chemical mechanism initiated via the reductive cleavage of S-adenosyl-L-methionine (SAM). Is capable of catalyzing multiple turnovers. In vitro, use of a peptide substrate in which the target serine is changed to cysteine also gives rise to turnover, supporting approximately 4-fold the activity of that observed with the natural substrate. The chain is Serine-type anaerobic sulfatase-maturating enzyme from Klebsiella pneumoniae.